Consider the following 601-residue polypeptide: Probable serine/threonine-protein kinase WNK3 (601 aa).

One can recognise a Protein kinase domain in the interval 34–291 (GRFNEILGKG…ARELLDDPFL (258 aa)). Residues 114–117 (TELF) and Lys-164 contribute to the ATP site. Asp-181 (proton acceptor) is an active-site residue. Disordered stretches follow at residues 470 to 498 (GWRPGPATDDDDDDDLVGGGDDPDAPGGA) and 551 to 601 (ADDD…SEQP). The span at 477–493 (TDDDDDDDLVGGGDDPD) shows a compositional bias: acidic residues. Over residues 560-571 (LQGSSSDTGGSN) the composition is skewed to polar residues. Basic and acidic residues predominate over residues 572–583 (HEQHAMGKDKEV).

It belongs to the protein kinase superfamily. Ser/Thr protein kinase family. WNK subfamily.

It carries out the reaction L-seryl-[protein] + ATP = O-phospho-L-seryl-[protein] + ADP + H(+). The catalysed reaction is L-threonyl-[protein] + ATP = O-phospho-L-threonyl-[protein] + ADP + H(+). This chain is Probable serine/threonine-protein kinase WNK3 (WNK3), found in Oryza sativa subsp. japonica (Rice).